Here is a 503-residue protein sequence, read N- to C-terminus: Glycerol kinase (503 aa).

Thr14 lines the ADP pocket. Thr14, Thr15, and Ser16 together coordinate ATP. Residue Thr14 participates in sn-glycerol 3-phosphate binding. Arg18 contributes to the ADP binding site. Sn-glycerol 3-phosphate-binding residues include Arg84, Glu85, Tyr136, and Asp246. 5 residues coordinate glycerol: Arg84, Glu85, Tyr136, Asp246, and Gln247. Thr268 and Gly311 together coordinate ADP. Positions 268, 311, 315, and 412 each coordinate ATP. ADP-binding residues include Gly412 and Asn416.

Belongs to the FGGY kinase family.

It catalyses the reaction glycerol + ATP = sn-glycerol 3-phosphate + ADP + H(+). It functions in the pathway polyol metabolism; glycerol degradation via glycerol kinase pathway; sn-glycerol 3-phosphate from glycerol: step 1/1. Inhibited by fructose 1,6-bisphosphate (FBP). Key enzyme in the regulation of glycerol uptake and metabolism. Catalyzes the phosphorylation of glycerol to yield sn-glycerol 3-phosphate. This Haemophilus influenzae (strain PittEE) protein is Glycerol kinase.